Here is a 255-residue protein sequence, read N- to C-terminus: Imidazole glycerol phosphate synthase subunit HisF (255 aa).

Catalysis depends on residues D11 and D130.

Belongs to the HisA/HisF family. As to quaternary structure, heterodimer of HisH and HisF.

Its subcellular location is the cytoplasm. The catalysed reaction is 5-[(5-phospho-1-deoxy-D-ribulos-1-ylimino)methylamino]-1-(5-phospho-beta-D-ribosyl)imidazole-4-carboxamide + L-glutamine = D-erythro-1-(imidazol-4-yl)glycerol 3-phosphate + 5-amino-1-(5-phospho-beta-D-ribosyl)imidazole-4-carboxamide + L-glutamate + H(+). The protein operates within amino-acid biosynthesis; L-histidine biosynthesis; L-histidine from 5-phospho-alpha-D-ribose 1-diphosphate: step 5/9. IGPS catalyzes the conversion of PRFAR and glutamine to IGP, AICAR and glutamate. The HisF subunit catalyzes the cyclization activity that produces IGP and AICAR from PRFAR using the ammonia provided by the HisH subunit. This Rhodopseudomonas palustris (strain BisB5) protein is Imidazole glycerol phosphate synthase subunit HisF.